A 795-amino-acid chain; its full sequence is uncharacterized protein (795 aa).

The stretch at 228–280 forms a coiled coil; it reads NIICFKNKCKNNEKEKKEEEEDHDHDHDDKKKEKEDKEKEEEEEEEDSNDDFE. Disordered regions lie at residues 242 to 278, 326 to 430, 455 to 484, and 673 to 743; these read EKKE…SNDD, TTTT…TPNR, INQQ…KSEP, and NNNN…NENE. The segment covering 251–264 has biased composition (basic and acidic residues); that stretch reads DHDHDDKKKEKEDK. A compositionally biased stretch (acidic residues) spans 265-278; the sequence is EKEEEEEEEDSNDD. Positions 326–345 are enriched in low complexity; the sequence is TTTTTVNGSKNSSNTTTPIT. Residues 362 to 373 show a composition bias toward acidic residues; sequence DDDDDDDLTDED. A compositionally biased stretch (polar residues) spans 377–398; it reads HNEIYSTSPKVSHSTFCQSSPT. 3 stretches are compositionally biased toward low complexity: residues 399 to 414, 455 to 480, and 673 to 729; these read LLDL…QQQQ, INQQ…SSNI, and NNNN…NQNE. Over residues 732–743 the composition is skewed to basic and acidic residues; it reads NENKNENENENE.

This is an uncharacterized protein from Dictyostelium discoideum (Social amoeba).